Reading from the N-terminus, the 84-residue chain is Small ribosomal subunit protein bS20 (84 aa).

It belongs to the bacterial ribosomal protein bS20 family.

Binds directly to 16S ribosomal RNA. This chain is Small ribosomal subunit protein bS20, found in Levilactobacillus brevis (strain ATCC 367 / BCRC 12310 / CIP 105137 / JCM 1170 / LMG 11437 / NCIMB 947 / NCTC 947) (Lactobacillus brevis).